Reading from the N-terminus, the 486-residue chain is Methionine aminopeptidase 2-2 (486 aa).

Over residues 1-10 (MGSKSPEGHR) the composition is skewed to basic and acidic residues. Residues 1 to 120 (MGSKSPEGHR…ALPATELKQT (120 aa)) form a disordered region. Positions 46-56 (GDDDDDEDAEE) are enriched in acidic residues. The segment covering 93 to 108 (KKKKRKKSNKKKKKTK) has biased composition (basic residues). Histidine 238 provides a ligand contact to substrate. Residues aspartate 259, aspartate 270, and histidine 339 each coordinate a divalent metal cation. Histidine 347 contacts substrate. Residues glutamate 372 and glutamate 467 each contribute to the a divalent metal cation site.

It belongs to the peptidase M24A family. Methionine aminopeptidase eukaryotic type 2 subfamily. It depends on Co(2+) as a cofactor. Zn(2+) serves as cofactor. Mn(2+) is required as a cofactor. The cofactor is Fe(2+).

Its subcellular location is the cytoplasm. It carries out the reaction Release of N-terminal amino acids, preferentially methionine, from peptides and arylamides.. In terms of biological role, cotranslationally removes the N-terminal methionine from nascent proteins. The N-terminal methionine is often cleaved when the second residue in the primary sequence is small and uncharged (Met-Ala-, Cys, Gly, Pro, Ser, Thr, or Val). The sequence is that of Methionine aminopeptidase 2-2 from Aspergillus fumigatus (strain ATCC MYA-4609 / CBS 101355 / FGSC A1100 / Af293) (Neosartorya fumigata).